The sequence spans 261 residues: MTQSTSRVALVTGATSGIGLATARLLAAQGHLVFLGARTESDVIATVKALRNDGLEAEGQVLDVRDGASVTAFVQAAVDRYGRIDVLVNNAGRSGGGVTADLTDELWDDVIDTNLNSVFRMTRAVLTTGGMRTRERGRIINVASTAGKQGVVLGAPYSASKHGVVGFTKALGNELAPTGITVNAVCPGYVETPMAQRVRQGYAAAYDTTEEAILTKFQAKIPLGRYSTPEEVAGLIGYLASDTAASITSQALNVCGGLGNF.

Residue Leu-10–Phe-34 participates in NAD(+) binding. Position 144 (Ser-144) interacts with substrate. Tyr-157 acts as the Proton acceptor in catalysis.

The protein belongs to the short-chain dehydrogenases/reductases (SDR) family.

Its pathway is antifungal biosynthesis; monensin biosynthesis. The polypeptide is Monensin polyketide synthase putative ketoacyl reductase (Streptomyces virginiae (Streptomyces cinnamonensis)).